Consider the following 38-residue polypeptide: Large ribosomal subunit protein bL36 (38 aa).

It belongs to the bacterial ribosomal protein bL36 family.

This chain is Large ribosomal subunit protein bL36, found in Buchnera aphidicola subsp. Acyrthosiphon pisum (strain 5A).